A 1075-amino-acid chain; its full sequence is Disheveled-associated activator of morphogenesis 2 (1075 aa).

Positions 40 to 416 (VPIPPTEELN…QIVLQDERGD (377 aa)) constitute a GBD/FH3 domain. Positions 437–517 (NENEVKQWRD…VAQLNEYSQG (81 aa)) form a coiled coil. 3 disordered regions span residues 517–611 (GGSI…IPQP), 1006–1025 (KEQR…SISE), and 1048–1075 (SKLK…KLNY). Positions 523-532 (PAPPPPPPGG) are enriched in pro residues. Residues 533–544 (PLALSSALSSAL) are compositionally biased toward low complexity. Pro residues predominate over residues 550–581 (PPLPPPLPFSSCPPPPAPPPPPGGPPPPPGAP). The FH2 domain occupies 605–1075 (KKSIPQPSHP…RERVVTKLNY (471 aa)). The 51-residue stretch at 1025 to 1075 (EETGEFDDLVSALRSGEVFDKDLSKLKRNRKRSGNQGLETSRERVVTKLNY) folds into the DAD domain. Over residues 1064 to 1075 (TSRERVVTKLNY) the composition is skewed to basic and acidic residues.

It belongs to the formin homology family. In terms of tissue distribution, expressed in progenitor populations of the embryonic spinal cord (at protein level).

Key regulator of the Wnt signaling pathway, which is required for various processes during development, such as dorsal patterning, determination of left/right symmetry or myelination in the central nervous system. Acts downstream of Wnt ligands and upstream of beta-catenin (CTNNB1). Required for canonical Wnt signaling pathway during patterning in the dorsal spinal cord by promoting the aggregation of Disheveled (Dvl) complexes, thereby clustering and formation of Wnt receptor signalosomes and potentiating Wnt activity. During dorsal patterning of the spinal cord, inhibits oligodendrocytes differentiation via interaction with PIP5K1A. Also regulates non-canonical Wnt signaling pathway. Acts downstream of PITX2 in the developing gut and is required for left/right asymmetry within dorsal mesentery: affects mesenchymal condensation by lengthening cadherin-based junctions through WNT5A and non-canonical Wnt signaling, inducing polarized condensation in the left dorsal mesentery necessary to initiate gut rotation. Together with DAAM1, required for myocardial maturation and sarcomere assembly. The sequence is that of Disheveled-associated activator of morphogenesis 2 from Gallus gallus (Chicken).